A 485-amino-acid polypeptide reads, in one-letter code: Adenosylhomocysteinase (485 aa).

Substrate is bound by residues T64, D139, and E205. Residue 206-208 participates in NAD(+) binding; sequence TTT. K235 and D239 together coordinate substrate. Residues N240, 269 to 274, E292, N327, 348 to 350, and N397 each bind NAD(+); these read GYGDVG and IGH.

It belongs to the adenosylhomocysteinase family. In terms of assembly, homotetramer. It depends on NAD(+) as a cofactor. In terms of tissue distribution, mainly in floral buds and stems.

It catalyses the reaction S-adenosyl-L-homocysteine + H2O = L-homocysteine + adenosine. Its pathway is amino-acid biosynthesis; L-homocysteine biosynthesis; L-homocysteine from S-adenosyl-L-homocysteine: step 1/1. Functionally, adenosylhomocysteine is a competitive inhibitor of S-adenosyl-L-methionine-dependent methyl transferase reactions; therefore adenosylhomocysteinase may play a key role in the control of methylations via regulation of the intracellular concentration of adenosylhomocysteine. This Petroselinum crispum (Parsley) protein is Adenosylhomocysteinase (SAHH).